Consider the following 422-residue polypeptide: Ubiquitin-conjugating enzyme E2 Q1 (422 aa).

Residue Met-1 is modified to N-acetylmethionine. Positions 1-15 (MQQPQPQGQQQPGPG) are enriched in low complexity. Disordered stretches follow at residues 1–40 (MQQP…PGPC) and 174–221 (PLPA…EDDG). Over residues 16–35 (QQLGGQGAAPGAGGGPGGGP) the composition is skewed to gly residues. Residues 185–200 (VSSEDEDEEMPEDTED) show a composition bias toward acidic residues. Positions 212–221 (AEGKKSEDDG) are enriched in basic and acidic residues. Residues 251 to 415 (QATDRLMKEL…VQIHEKNGWY (165 aa)) form the UBC core domain. Cys-351 acts as the Glycyl thioester intermediate in catalysis.

The protein belongs to the ubiquitin-conjugating enzyme family. Monomer and homodimer. Only the homodimer is linked to ubiquitin through thiolester activation. Interacts (via N-terminus) with B4GALT1 (via N-terminal cytoplasmic domain). The interaction is direct. Post-translationally, autoubiquitinated in vitro in the presence of NEDD4L. In terms of tissue distribution, widely expressed.

Its subcellular location is the nucleus. It is found in the cell projection. It localises to the filopodium. The protein localises to the cytoplasm. The protein resides in the cytosol. It carries out the reaction S-ubiquitinyl-[E1 ubiquitin-activating enzyme]-L-cysteine + [E2 ubiquitin-conjugating enzyme]-L-cysteine = [E1 ubiquitin-activating enzyme]-L-cysteine + S-ubiquitinyl-[E2 ubiquitin-conjugating enzyme]-L-cysteine.. Its pathway is protein modification; protein ubiquitination. In terms of biological role, catalyzes the covalent attachment of ubiquitin to other proteins. May be involved in hormonal homeostasis in females. Involved in regulation of B4GALT1 cell surface expression, B4GALT1-mediated cell adhesion to laminin and embryoid body formation. This chain is Ubiquitin-conjugating enzyme E2 Q1 (UBE2Q1), found in Homo sapiens (Human).